The following is a 708-amino-acid chain: Fatty acid oxidation complex subunit alpha (708 aa).

Positions 1-190 (MDMEKTFNLT…KMGLVDDAVP (190 aa)) are enoyl-CoA hydratase. Residues 310–708 (QKVNKVMVLG…MAEEGTRFFS (399 aa)) form a 3-hydroxyacyl-CoA dehydrogenase region.

The protein in the N-terminal section; belongs to the enoyl-CoA hydratase/isomerase family. It in the central section; belongs to the 3-hydroxyacyl-CoA dehydrogenase family. As to quaternary structure, heterotetramer of two alpha chains (FadJ) and two beta chains (FadI).

It is found in the cytoplasm. It catalyses the reaction a (3S)-3-hydroxyacyl-CoA = a (2E)-enoyl-CoA + H2O. The catalysed reaction is a 4-saturated-(3S)-3-hydroxyacyl-CoA = a (3E)-enoyl-CoA + H2O. The enzyme catalyses a (3S)-3-hydroxyacyl-CoA + NAD(+) = a 3-oxoacyl-CoA + NADH + H(+). It carries out the reaction (3S)-3-hydroxybutanoyl-CoA = (3R)-3-hydroxybutanoyl-CoA. It functions in the pathway lipid metabolism; fatty acid beta-oxidation. Catalyzes the formation of a hydroxyacyl-CoA by addition of water on enoyl-CoA. Also exhibits 3-hydroxyacyl-CoA epimerase and 3-hydroxyacyl-CoA dehydrogenase activities. This chain is Fatty acid oxidation complex subunit alpha, found in Shewanella halifaxensis (strain HAW-EB4).